A 182-amino-acid chain; its full sequence is Large ribosomal subunit protein uL6 (182 aa).

This sequence belongs to the universal ribosomal protein uL6 family. As to quaternary structure, part of the 50S ribosomal subunit.

This protein binds to the 23S rRNA, and is important in its secondary structure. It is located near the subunit interface in the base of the L7/L12 stalk, and near the tRNA binding site of the peptidyltransferase center. This chain is Large ribosomal subunit protein uL6, found in Aeropyrum pernix (strain ATCC 700893 / DSM 11879 / JCM 9820 / NBRC 100138 / K1).